Here is a 446-residue protein sequence, read N- to C-terminus: Tubulin beta chain (446 aa).

8 residues coordinate GTP: Q11, E69, S138, G142, T143, G144, N204, and N226. E69 is a Mg(2+) binding site. Residues 426 to 446 (QDATAEEEGEYVEDEDEMDGM) form a disordered region. A compositionally biased stretch (acidic residues) spans 429–446 (TAEEEGEYVEDEDEMDGM).

Belongs to the tubulin family. In terms of assembly, dimer of alpha and beta chains. A typical microtubule is a hollow water-filled tube with an outer diameter of 25 nm and an inner diameter of 15 nM. Alpha-beta heterodimers associate head-to-tail to form protofilaments running lengthwise along the microtubule wall with the beta-tubulin subunit facing the microtubule plus end conferring a structural polarity. Microtubules usually have 13 protofilaments but different protofilament numbers can be found in some organisms and specialized cells. Mg(2+) is required as a cofactor.

The protein localises to the cytoplasm. Its subcellular location is the cytoskeleton. In terms of biological role, tubulin is the major constituent of microtubules, a cylinder consisting of laterally associated linear protofilaments composed of alpha- and beta-tubulin heterodimers. Microtubules grow by the addition of GTP-tubulin dimers to the microtubule end, where a stabilizing cap forms. Below the cap, tubulin dimers are in GDP-bound state, owing to GTPase activity of alpha-tubulin. The sequence is that of Tubulin beta chain from Euplotes crassus.